Reading from the N-terminus, the 235-residue chain is Regulator of G-protein signaling 18 (235 aa).

The residue at position 49 (serine 49) is a Phosphoserine. Residues 86-202 (SFDKLLSHRD…LKSETYLHLI (117 aa)) enclose the RGS domain. Phosphoserine occurs at positions 216 and 218.

Expressed in bone marrow, spleen, fetal liver and lung. At very low levels expressed in heart.

Its subcellular location is the cytoplasm. In terms of biological role, inhibits signal transduction by increasing the GTPase activity of G protein alpha subunits thereby driving them into their inactive GDP-bound form. Binds to G(i) alpha-1, G(i) alpha-2, G(i) alpha-3 and G(q) alpha. This chain is Regulator of G-protein signaling 18 (Rgs18), found in Mus musculus (Mouse).